Consider the following 376-residue polypeptide: Dihydroorotate dehydrogenase (quinone) (376 aa).

FMN is bound by residues 78–82 (AGFDK) and T102. K82 provides a ligand contact to substrate. 127–131 (NRMGF) is a substrate binding site. FMN is bound by residues N157 and N190. N190 is a substrate binding site. S193 functions as the Nucleophile in the catalytic mechanism. N195 is a binding site for substrate. K228 and T256 together coordinate FMN. Substrate is bound at residue 257–258 (NT). FMN-binding positions include G286, G315, and 336–337 (YT).

Belongs to the dihydroorotate dehydrogenase family. Type 2 subfamily. In terms of assembly, monomer. FMN serves as cofactor.

The protein resides in the cell membrane. It catalyses the reaction (S)-dihydroorotate + a quinone = orotate + a quinol. It participates in pyrimidine metabolism; UMP biosynthesis via de novo pathway; orotate from (S)-dihydroorotate (quinone route): step 1/1. Its function is as follows. Catalyzes the conversion of dihydroorotate to orotate with quinone as electron acceptor. The chain is Dihydroorotate dehydrogenase (quinone) from Trichormus variabilis (strain ATCC 29413 / PCC 7937) (Anabaena variabilis).